A 120-amino-acid polypeptide reads, in one-letter code: MSYRKLGRTTSQRKALLRDLATDLIINERIETTEARAKELRSVIEKMITLGKRGDLHARRQAAAFIRNEVANSETGQDALQKLFSDIAPRYQDRQGGYTRIMKLGPRRGDGAPMVIIELV.

This sequence belongs to the bacterial ribosomal protein bL17 family. Part of the 50S ribosomal subunit. Contacts protein L32.

The polypeptide is Large ribosomal subunit protein bL17 (Geobacillus thermodenitrificans (strain NG80-2)).